A 753-amino-acid chain; its full sequence is Probable TonB-dependent siderophore receptor PiuA (753 aa).

An N-terminal signal peptide occupies residues 1-35 (MSRQSTDTAVSSQRLLASAIGVAITAIAAPQAAQA). Residues 79–185 (PLLDTPKTVT…TGGSLNLISK (107 aa)) form the TBDR plug domain. A TBDR beta-barrel domain is found at 190 to 753 (DNFTDAGFTW…TALLGVNFHF (564 aa)). Cysteines 420 and 430 form a disulfide.

The protein belongs to the TonB-dependent receptor family.

The protein localises to the cell outer membrane. Functionally, involved in the initial step of iron uptake by binding iron chelating siderophores, thereby allowing extraction of iron from the environment. Probably involved in the transport of siderophores, including host catecholamines such as dopamine. This chain is Probable TonB-dependent siderophore receptor PiuA, found in Pseudomonas aeruginosa (strain ATCC 15692 / DSM 22644 / CIP 104116 / JCM 14847 / LMG 12228 / 1C / PRS 101 / PAO1).